Reading from the N-terminus, the 251-residue chain is Pyrroloquinoline-quinone synthase (251 aa).

It belongs to the PqqC family.

The enzyme catalyses 6-(2-amino-2-carboxyethyl)-7,8-dioxo-1,2,3,4,7,8-hexahydroquinoline-2,4-dicarboxylate + 3 O2 = pyrroloquinoline quinone + 2 H2O2 + 2 H2O + H(+). The protein operates within cofactor biosynthesis; pyrroloquinoline quinone biosynthesis. Ring cyclization and eight-electron oxidation of 3a-(2-amino-2-carboxyethyl)-4,5-dioxo-4,5,6,7,8,9-hexahydroquinoline-7,9-dicarboxylic-acid to PQQ. This chain is Pyrroloquinoline-quinone synthase, found in Klebsiella pneumoniae subsp. pneumoniae (strain ATCC 700721 / MGH 78578).